The following is a 365-amino-acid chain: UDP-N-acetylglucosamine--N-acetylmuramyl-(pentapeptide) pyrophosphoryl-undecaprenol N-acetylglucosamine transferase (365 aa).

Residues 17 to 19, N129, R167, S194, I250, 269 to 274, and Q295 contribute to the UDP-N-acetyl-alpha-D-glucosamine site; these read TGG and ALTVSE.

This sequence belongs to the glycosyltransferase 28 family. MurG subfamily.

It is found in the cell inner membrane. The catalysed reaction is di-trans,octa-cis-undecaprenyl diphospho-N-acetyl-alpha-D-muramoyl-L-alanyl-D-glutamyl-meso-2,6-diaminopimeloyl-D-alanyl-D-alanine + UDP-N-acetyl-alpha-D-glucosamine = di-trans,octa-cis-undecaprenyl diphospho-[N-acetyl-alpha-D-glucosaminyl-(1-&gt;4)]-N-acetyl-alpha-D-muramoyl-L-alanyl-D-glutamyl-meso-2,6-diaminopimeloyl-D-alanyl-D-alanine + UDP + H(+). Its pathway is cell wall biogenesis; peptidoglycan biosynthesis. Functionally, cell wall formation. Catalyzes the transfer of a GlcNAc subunit on undecaprenyl-pyrophosphoryl-MurNAc-pentapeptide (lipid intermediate I) to form undecaprenyl-pyrophosphoryl-MurNAc-(pentapeptide)GlcNAc (lipid intermediate II). The protein is UDP-N-acetylglucosamine--N-acetylmuramyl-(pentapeptide) pyrophosphoryl-undecaprenol N-acetylglucosamine transferase of Shewanella pealeana (strain ATCC 700345 / ANG-SQ1).